The primary structure comprises 291 residues: MESPWNELTLAFSRTSMFPFFDIAHYLVSVMALKHQPGAAALAWKNPLSSWFTAMLHCFGGGILSCVLLAEPPLRFLANNTNILLASSIWYIAFFCPCDLISQAYSFLPVQLLAAGMKEVTRTWKIVGGVTHANSYYKNGWIVMIAVGWARGAGGSIITNFEQLVKGCWKPEAEEWLKMSYPAKVTLLGSVIFTFQQTKYLAISKHNLMFLFTVFLVATKITMMITKTALVPFACFEDTLSRMLFGWQQQFSPCEKKSETKSSFNGTGSSTSKPVANASDKVKKKHSKKTE.

Residues 1-15 (MESPWNELTLAFSRT) are Lumenal-facing. A helical membrane pass occupies residues 16 to 33 (SMFPFFDIAHYLVSVMAL). The Cytoplasmic segment spans residues 34 to 47 (KHQPGAAALAWKNP). A helical transmembrane segment spans residues 48 to 69 (LSSWFTAMLHCFGGGILSCVLL). Residues 70-80 (AEPPLRFLANN) are Lumenal-facing. A helical membrane pass occupies residues 81 to 100 (TNILLASSIWYIAFFCPCDL). Topologically, residues 101–103 (ISQ) are cytoplasmic. Residues 104–122 (AYSFLPVQLLAAGMKEVTR) traverse the membrane as a helical segment. A 1,2-diacyl-sn-glycero-3-phospho-(1D-myo-inositol-4,5-bisphosphate) contacts are provided by lysine 118 and arginine 122. Over 123-138 (TWKIVGGVTHANSYYK) the chain is Lumenal. The chain crosses the membrane as a helical span at residues 139–156 (NGWIVMIAVGWARGAGGS). Over 157–179 (IITNFEQLVKGCWKPEAEEWLKM) the chain is Cytoplasmic. A helical membrane pass occupies residues 180–196 (SYPAKVTLLGSVIFTFQ). The Lumenal segment spans residues 197 to 207 (QTKYLAISKHN). The chain crosses the membrane as a helical span at residues 208–225 (LMFLFTVFLVATKITMMI). Residues 226 to 291 (TKTALVPFAC…VKKKHSKKTE (66 aa)) lie on the Cytoplasmic side of the membrane. Positions 257-291 (KSETKSSFNGTGSSTSKPVANASDKVKKKHSKKTE) are disordered. Residues 261–274 (KSSFNGTGSSTSKP) are compositionally biased toward polar residues. Serine 262 bears the Phosphoserine mark. Residues 282–291 (VKKKHSKKTE) are compositionally biased toward basic residues.

It belongs to the TMEM38 family. In terms of assembly, homotrimer; conformation seems to be controled by binding to diacylglycerol (DAG).

Its subcellular location is the endoplasmic reticulum membrane. It catalyses the reaction K(+)(in) = K(+)(out). Its activity is regulated as follows. Channel activity is activated by increased cytosolic Ca(2+) levels and blocked by luminal high Ca(2+) levels. In terms of biological role, intracellular monovalent cation channel required for maintenance of rapid intracellular calcium release. Acts as a potassium counter-ion channel that functions in synchronization with calcium release from intracellular stores. Activated by increased cytosolic Ca(2+) levels. The sequence is that of Trimeric intracellular cation channel type B (TMEM38B) from Bos taurus (Bovine).